The sequence spans 51 residues: Large ribosomal subunit protein eL39 (51 aa).

This sequence belongs to the eukaryotic ribosomal protein eL39 family.

In Thermococcus onnurineus (strain NA1), this protein is Large ribosomal subunit protein eL39.